We begin with the raw amino-acid sequence, 407 residues long: Serine/threonine transporter SstT (407 aa).

Transmembrane regions (helical) follow at residues 12–32 (GNLI…GISS), 42–62 (LGIL…FILI), 81–101 (IIIL…LANF), 141–161 (ALSS…GIAL), 179–199 (VLKI…GLVA), 218–238 (ILLV…IVFF), 245–267 (FPLI…SSAA), 288–308 (ISIP…IAIL), and 330–350 (IIAT…LLLI).

Belongs to the dicarboxylate/amino acid:cation symporter (DAACS) (TC 2.A.23) family.

It localises to the cell inner membrane. The enzyme catalyses L-serine(in) + Na(+)(in) = L-serine(out) + Na(+)(out). It catalyses the reaction L-threonine(in) + Na(+)(in) = L-threonine(out) + Na(+)(out). Functionally, involved in the import of serine and threonine into the cell, with the concomitant import of sodium (symport system). In Campylobacter jejuni subsp. jejuni serotype O:2 (strain ATCC 700819 / NCTC 11168), this protein is Serine/threonine transporter SstT.